Reading from the N-terminus, the 157-residue chain is Small ribosomal subunit protein uS7 (157 aa).

This sequence belongs to the universal ribosomal protein uS7 family. As to quaternary structure, part of the 30S ribosomal subunit. Contacts proteins S9 and S11.

One of the primary rRNA binding proteins, it binds directly to 16S rRNA where it nucleates assembly of the head domain of the 30S subunit. Is located at the subunit interface close to the decoding center, probably blocks exit of the E-site tRNA. In Caulobacter sp. (strain K31), this protein is Small ribosomal subunit protein uS7.